A 366-amino-acid chain; its full sequence is cAMP-dependent protein kinase regulatory subunit (366 aa).

Residues 1 to 121 (MSGGNEEDQL…SLESAMRKNL (121 aa)) form a dimerization and phosphorylation region. The tract at residues 55-87 (QRAQEGGNPDAADDDDIIVEPPKRSGGRRTGIS) is disordered. Residues 82–86 (RRTGI) carry the Pseudophosphorylation motif motif. S87 carries the post-translational modification Phosphoserine. 3',5'-cyclic AMP contacts are provided by residues 122 to 239 (LFAH…SKVQ), E187, R196, 240 to 366 (ILAD…KLMT), E311, and R320.

The protein belongs to the cAMP-dependent kinase regulatory chain family. As to quaternary structure, tetramer, composed of 2 regulatory (R) and 2 catalytic (C) subunits. In the presence of cAMP it dissociates into 2 active monomeric C subunits and an R dimer that binds four cAMP molecules. In terms of processing, the pseudophosphorylation site binds to the substrate-binding region of the catalytic chain but is not phosphorylated. The physiological significance of phosphorylations by other kinases is unclear.

It is found in the cytoplasm. The protein resides in the cytosol. Its function is as follows. Controls the rhythmic contraction of enteric muscles probably by regulating G-protein coupled receptor aex-2-mediated calcium influx in GABAergic DVB neurons. The polypeptide is cAMP-dependent protein kinase regulatory subunit (kin-2) (Caenorhabditis elegans).